The following is a 292-amino-acid chain: ATP-dependent Clp protease proteolytic subunit 4, chloroplastic (292 aa).

A chloroplast-targeting transit peptide spans 1–65 (MGTLSLSSSL…LRFANASIEM (65 aa)). An N-acetylserine modification is found at S66. S158 serves as the catalytic Nucleophile. H183 is an active-site residue.

It belongs to the peptidase S14 family. Component of the chloroplastic Clp protease core complex which consist of at least 16 proteins: CLPP4 (3 copies), CLPP5 (3 copies), CLPR4 (2 copies), ClpP1 (1 copy), CLPP6 (1 copy), CLPR2 (1 copy), CLPT1 (1 copy), CLPT2 (1 copy) and 3 copies of CLPP3 and/or CLPR1 and/or CLPR3. Interacts with CHIP. The core complex is organized in two heptameric rings, one containing CLPP3,4,5,6 in a 1:2:3:1 ratio and the other CLPP1 and CLPR1,2,3,4 in a 3:1:1:1:1 ratio. Ubiquitinated by CHIP. Mostly expressed in leaves. Also detected in stems, and to a lower extent, in roots (at protein level).

It is found in the plastid. The protein localises to the chloroplast stroma. The catalysed reaction is Hydrolysis of proteins to small peptides in the presence of ATP and magnesium. alpha-casein is the usual test substrate. In the absence of ATP, only oligopeptides shorter than five residues are hydrolyzed (such as succinyl-Leu-Tyr-|-NHMec, and Leu-Tyr-Leu-|-Tyr-Trp, in which cleavage of the -Tyr-|-Leu- and -Tyr-|-Trp bonds also occurs).. Functionally, cleaves peptides in various proteins in a process that requires ATP hydrolysis. Has a chymotrypsin-like activity. Plays a major role in the degradation of misfolded proteins. Essential protein required for chloroplast development and integrity. Essential for Embryogenesis. The chain is ATP-dependent Clp protease proteolytic subunit 4, chloroplastic from Arabidopsis thaliana (Mouse-ear cress).